We begin with the raw amino-acid sequence, 1191 residues long: Putative glycoside hydrolase 22789 (1191 aa).

The span at 173–187 shows a compositional bias: low complexity; the sequence is PSSSGASSVLPSPSA. The disordered stretch occupies residues 173–221; that stretch reads PSSSGASSVLPSPSAHTPDAATDANHLPNPDPASGRQELTRAGRPARKK.

This sequence belongs to the glycoside hydrolase-like 3 (GHL3) family.

This chain is Putative glycoside hydrolase 22789, found in Monosiga brevicollis (Choanoflagellate).